The following is a 115-amino-acid chain: Ig heavy chain V-III region W3082 (115 aa).

In terms of domain architecture, Ig-like spans 1-114; it reads EVKLEESGGG…WGQGTLVTVS (114 aa). The cysteines at positions 22 and 98 are disulfide-linked.

This Mus musculus (Mouse) protein is Ig heavy chain V-III region W3082.